Consider the following 168-residue polypeptide: MKKMLKVGQIVNTHGIKGELKVTSLSDYLERFEELEWVYIQGYDEKYYIGNIKYRPTTVILSFEGYDNINIVEQFKGKYVLIDESQRRELPEDTFYKADLIGLDGYTVEEVYLGKLVDIIQAGSNEVYVFRDKETNKDILIPAVKEFIPEISLEKKRITVDPIEGMIE.

Residues 92–166 (EDTFYKADLI…RITVDPIEGM (75 aa)) enclose the PRC barrel domain.

It belongs to the RimM family. Binds ribosomal protein uS19.

Its subcellular location is the cytoplasm. An accessory protein needed during the final step in the assembly of 30S ribosomal subunit, possibly for assembly of the head region. Essential for efficient processing of 16S rRNA. May be needed both before and after RbfA during the maturation of 16S rRNA. It has affinity for free ribosomal 30S subunits but not for 70S ribosomes. The protein is Ribosome maturation factor RimM of Alkaliphilus metalliredigens (strain QYMF).